Reading from the N-terminus, the 1534-residue chain is MDTQRFQSQFHWHLSFKFSGAIAACLSLSLVGTGLANADDSLPSSNYAPPAGGTFFLLADSSFSSSEESKVRLEAPGRDYRRYQMEEYGGVDVRLYRIPDPMAFLRQQKNLHRIVVQPQYLGDGLNNTLTWLWDNWYGKSRRVMQRTFSSQSRQNVTQALPELQLGNAIIKPSRYVQNNQFSPLKKYPLVEQFRYPLWQAKPVEPQQGVKLEGASSNFISPQPGNIYIPLGQQEPGLYLVEAMVGGYRATTVVFVSDTVALSKVSGKELLVWTAGKKQGEAKPGSEILWTDGLGVMTRGVTDDSGTLQLQHISPERSYILGKDAEGGVFVSENFFYESEIYNTRLYIFTDRPLYRAGDRVDVKVMGREFHDPLHSSPIVSAPAKLSVLDANGSLLQTVDVTLDARNGGQGSFRLPENAVAGGYELRLAYRNQVYSSSFRVANYIKPHFEIGLALDKKEFKTGEAVSGKLQLLYPDGEPVKNARVQLSLRAQQLSMVGNDLRYAGRFPVSLEGSETVSDASGHVALNLPAADKPSRYLLTVSASDGAAYRVTTTKEILIERGLAHYSLSTAAQYSNSGESVVFRYAALESSKQVPVTYEWLRLEDRTSHSGDLPSGGKSFTVNFDKPGNYNLTLRDKDGLILAGLSHAVSGKGSMSHTGTVDIVADKTLYQPGETAKMLITFPEPIDEALLTLERDRVEQQSLLSHPANWLTLQRLNDTQYEARVPVSNSFAPNITFSVLYTRNGQYSFQNAGIKVAVPQLDIRVKTDKTHYQPGELVNVELTSSLKGKPVSAQLTVGVVDEMIYALQPEIAPNIGKFFYPLGRNNVRTSSSLSFISYDQALSSEPVAPGATNRSERRVKMLERPRREEVDTAAWMPSLTTDKQGKAYFTFLMPDSLTRWRITARGMNGDGLVGQGRAYLRSEKNLYMKWSMPTVYRVGDKPSAGLFIFSQQDNEPVALVTKFAGAEMRQTLTLHKGANYISLAQNIQQSGLLSAELQQNGQVQDSISTKLSFVDNSWPVEQQKNVMLGGGDNALMLPEQASNIRLQSSETPQEIFRNNLDALVDEPWGGVINTGSRLIPLSLAWRSLADHQSAAANDIRQMIQDNRLRLMQLAGPGARFTWWGEDGNGDAFLTAWAWYADWQASQALGVTQQPEYWQHMLDSYAEQADNMPLLHRALVLAWAQEMNLPCKTLLKGLDEAIARRGTKTEDFSEEDTRDINDSLILDTPESPLADAVANVLTMTLLKKAQLKSTVMPQVQQYAWDKAVNSNQPLAHTVVLLNSGGDATQAAAILSGLTAEQSTIERALAMNWLAKYMATMPSVVLPAPAGAWAKHKLTGGGEYWRWVGQGVPDILSFGDELSPQNVQVRWREAAKTAQQSNIPVTVERQLYRLIPGEEEMSFTLQPVTSNEIDSDALYLDEITLTSEQDAVLRYGQVEVPLPPGADVERTTWGISVNKPNAGKQQGQLLEKARNEMGELAYMVPVKELTGTVTFRHLLRFSQKGQFVLPPARYVRSYAPAQQSVAAGSEWTGMQVK.

The first 38 residues, 1 to 38 (MDTQRFQSQFHWHLSFKFSGAIAACLSLSLVGTGLANA), serve as a signal peptide directing secretion.

Belongs to the protease inhibitor I39 (alpha-2-macroglobulin) family. Bacterial alpha-2-macroglobulin subfamily.

The protein is Alpha-2-macroglobulin homolog (yfaS) of Escherichia coli O157:H7.